A 464-amino-acid polypeptide reads, in one-letter code: Argininosuccinate lyase (464 aa).

Belongs to the lyase 1 family. Argininosuccinate lyase subfamily.

Its subcellular location is the cytoplasm. It catalyses the reaction 2-(N(omega)-L-arginino)succinate = fumarate + L-arginine. It participates in amino-acid biosynthesis; L-arginine biosynthesis; L-arginine from L-ornithine and carbamoyl phosphate: step 3/3. This is Argininosuccinate lyase from Stutzerimonas stutzeri (strain A1501) (Pseudomonas stutzeri).